A 396-amino-acid polypeptide reads, in one-letter code: NADH-quinone oxidoreductase subunit D (396 aa).

The protein belongs to the complex I 49 kDa subunit family. NDH-1 is composed of 14 different subunits. Subunits NuoB, C, D, E, F, and G constitute the peripheral sector of the complex.

Its subcellular location is the cell inner membrane. The catalysed reaction is a quinone + NADH + 5 H(+)(in) = a quinol + NAD(+) + 4 H(+)(out). Functionally, NDH-1 shuttles electrons from NADH, via FMN and iron-sulfur (Fe-S) centers, to quinones in the respiratory chain. The immediate electron acceptor for the enzyme in this species is believed to be ubiquinone. Couples the redox reaction to proton translocation (for every two electrons transferred, four hydrogen ions are translocated across the cytoplasmic membrane), and thus conserves the redox energy in a proton gradient. This is NADH-quinone oxidoreductase subunit D from Bartonella henselae (strain ATCC 49882 / DSM 28221 / CCUG 30454 / Houston 1) (Rochalimaea henselae).